The following is a 118-amino-acid chain: Small ribosomal subunit protein eS10 (118 aa).

A disordered region spans residues Arg-91 to Asp-118. Over residues Gly-106–Asp-118 the composition is skewed to basic residues.

It belongs to the eukaryotic ribosomal protein eS10 family. As to quaternary structure, component of the small ribosomal subunit. Mature ribosomes consist of a small (40S) and a large (60S) subunit. The 40S subunit contains about 32 different proteins and 1 molecule of RNA (18S). The 60S subunit contains 45 different proteins and 3 molecules of RNA (25S, 5.8S and 5S).

It localises to the cytoplasm. Functionally, component of the ribosome, a large ribonucleoprotein complex responsible for the synthesis of proteins in the cell. The small ribosomal subunit (SSU) binds messenger RNAs (mRNAs) and translates the encoded message by selecting cognate aminoacyl-transfer RNA (tRNA) molecules. The large subunit (LSU) contains the ribosomal catalytic site termed the peptidyl transferase center (PTC), which catalyzes the formation of peptide bonds, thereby polymerizing the amino acids delivered by tRNAs into a polypeptide chain. The nascent polypeptides leave the ribosome through a tunnel in the LSU and interact with protein factors that function in enzymatic processing, targeting, and the membrane insertion of nascent chains at the exit of the ribosomal tunnel. This is Small ribosomal subunit protein eS10 (RPS10) from Candida albicans (strain SC5314 / ATCC MYA-2876) (Yeast).